The chain runs to 518 residues: 3-octaprenyl-4-hydroxybenzoate carboxy-lyase (518 aa).

Asparagine 177 provides a ligand contact to Mn(2+). Prenylated FMN contacts are provided by residues 180–182, 194–196, and 199–200; these read IYR, RWL, and RG. Residue glutamate 243 coordinates Mn(2+). Catalysis depends on aspartate 318, which acts as the Proton donor.

This sequence belongs to the UbiD family. In terms of assembly, homohexamer. Prenylated FMN serves as cofactor. It depends on Mn(2+) as a cofactor.

The protein resides in the cell membrane. The enzyme catalyses a 4-hydroxy-3-(all-trans-polyprenyl)benzoate + H(+) = a 2-(all-trans-polyprenyl)phenol + CO2. It participates in cofactor biosynthesis; ubiquinone biosynthesis. In terms of biological role, catalyzes the decarboxylation of 3-octaprenyl-4-hydroxy benzoate to 2-octaprenylphenol, an intermediate step in ubiquinone biosynthesis. The polypeptide is 3-octaprenyl-4-hydroxybenzoate carboxy-lyase (Burkholderia multivorans (strain ATCC 17616 / 249)).